The following is a 148-amino-acid chain: Arginine repressor (148 aa).

The protein belongs to the ArgR family.

The protein localises to the cytoplasm. It participates in amino-acid biosynthesis; L-arginine biosynthesis [regulation]. Functionally, regulates arginine biosynthesis genes. This Chlorobium phaeobacteroides (strain BS1) protein is Arginine repressor.